The following is a 962-amino-acid chain: Rho GTPase-activating protein syd-1 (962 aa).

Disordered regions lie at residues 231–367 (GKKS…MRSD), 397–419 (PRTL…RIMT), and 437–471 (CGEE…NGSP). Composition is skewed to polar residues over residues 243-261 (NATT…SSPR), 323-345 (SFNS…SSTA), 401-412 (RQPNDSNKSNSL), and 453-471 (PPFS…NGSP). Positions 572–696 (RAAGPGINVD…NDDRVFALNL (125 aa)) constitute a C2 domain. One can recognise a Rho-GAP domain in the interval 729 to 923 (VPLGRLVQRE…LDMNQASSSL (195 aa)). The span at 934–947 (VNSESGSDSPATSG) shows a compositional bias: polar residues. The disordered stretch occupies residues 934-962 (VNSESGSDSPATSGQKGGGGVSYVSESQC).

The protein localises to the synapse. Its function is as follows. Probable GTPase activator for the Rho-type GTPases by converting them to an inactive GDP-bound state. Regulates the localization and assembly of presynaptic components during presynaptic development and is required for specifying the identity of axons during initial polarity acquisition. In these roles it is thought to act cell autonomously downstream of syg-1 and syg-2 and upstream of syd-2, possibly as a positive regulator of the latter. Required for the control of movement, egg-laying and the correct localization of elks-1. This is Rho GTPase-activating protein syd-1 from Caenorhabditis briggsae.